Here is an 85-residue protein sequence, read N- to C-terminus: Alpha-toxin Amm8 (85 aa).

A signal peptide spans 1–19; sequence MNYLVMISLALLFMTGVES. Residues 21 to 83 enclose the LCN-type CS-alpha/beta domain; the sequence is KDGYIVNDIN…VRTKGPGRCN (63 aa). 4 disulfide bridges follow: Cys31-Cys82, Cys35-Cys55, Cys41-Cys65, and Cys45-Cys67. Arg85 is a propeptide (removed by a carboxypeptidase).

It belongs to the long (4 C-C) scorpion toxin superfamily. Sodium channel inhibitor family. Alpha subfamily. As to expression, expressed by the venom gland.

The protein resides in the secreted. Its function is as follows. Alpha toxins bind voltage-independently at site-3 of sodium channels (Nav) and inhibit the inactivation of the activated channels, thereby blocking neuronal transmission. The toxin principally slows the inactivation process of TTX-sensitive sodium channels. It discriminates neuronal versus muscular sodium channel, as it is more potent on rat brain Nav1.2/SCN2A (EC(50)=29 nM) than on rat skeletal muscle Nav1.4/SCN4A (EC(50)=416 nM). It also shows a weak activity on Nav1.7/SCN9A (EC(50)=1.76 uM). In vivo, the toxin produces pain hypersensibility to mechanical and thermal stimuli. It also exhibits potent analgesic activity (when injected intraperitoneally), increasing hot plate and tail flick withdrawal latencies in a dose-dependent fashion. This paradoxical analgesic action, is significantly suppressed by opioid receptor antagonists, suggesting a pain-induced analgesia mechanism that involves an endogenous opioid system. This led to hypothesis that pain relief induced by peripheral administration of Amm VIII may result from sensitization of primary afferent neurons and subsequent activation of an opioid-dependent noxious inhibitory control. This Androctonus mauritanicus mauritanicus (Scorpion) protein is Alpha-toxin Amm8.